Reading from the N-terminus, the 147-residue chain is Large ribosomal subunit protein bL9 (147 aa).

The protein belongs to the bacterial ribosomal protein bL9 family.

Functionally, binds to the 23S rRNA. This chain is Large ribosomal subunit protein bL9, found in Clostridium botulinum (strain ATCC 19397 / Type A).